The following is a 148-amino-acid chain: Hemoglobin subunit beta-4 (148 aa).

Residues 3–148 (DWTDPERSAI…VVSALGRQYH (146 aa)) form the Globin domain. Residues His64 and His93 each coordinate heme b.

Belongs to the globin family. In terms of assembly, heterotetramer of two alpha chains and two beta chains. In terms of tissue distribution, red blood cells.

Involved in oxygen transport from gills to the various peripheral tissues. This chain is Hemoglobin subunit beta-4 (hbb4), found in Oncorhynchus mykiss (Rainbow trout).